The sequence spans 450 residues: tRNA-2-methylthio-N(6)-dimethylallyladenosine synthase (450 aa).

The MTTase N-terminal domain occupies 2–119 (KKVFVKTYGC…LPDLIARRQR (118 aa)). The [4Fe-4S] cluster site is built by Cys11, Cys48, Cys82, Cys156, Cys160, and Cys163. Residues 142–375 (RVEGPSAFVS…QATIEENVQR (234 aa)) form the Radical SAM core domain. In terms of domain architecture, TRAM spans 378 to 448 (QGMVGTVQRI…PHSLRGEIVV (71 aa)).

This sequence belongs to the methylthiotransferase family. MiaB subfamily. As to quaternary structure, monomer. The cofactor is [4Fe-4S] cluster.

Its subcellular location is the cytoplasm. The enzyme catalyses N(6)-dimethylallyladenosine(37) in tRNA + (sulfur carrier)-SH + AH2 + 2 S-adenosyl-L-methionine = 2-methylsulfanyl-N(6)-dimethylallyladenosine(37) in tRNA + (sulfur carrier)-H + 5'-deoxyadenosine + L-methionine + A + S-adenosyl-L-homocysteine + 2 H(+). In terms of biological role, catalyzes the methylthiolation of N6-(dimethylallyl)adenosine (i(6)A), leading to the formation of 2-methylthio-N6-(dimethylallyl)adenosine (ms(2)i(6)A) at position 37 in tRNAs that read codons beginning with uridine. This Cupriavidus taiwanensis (strain DSM 17343 / BCRC 17206 / CCUG 44338 / CIP 107171 / LMG 19424 / R1) (Ralstonia taiwanensis (strain LMG 19424)) protein is tRNA-2-methylthio-N(6)-dimethylallyladenosine synthase.